A 239-amino-acid chain; its full sequence is Cell number regulator 6 (239 aa).

Residues 1–10 (MAEDATSSHP) show a composition bias toward polar residues. Positions 1–33 (MAEDATSSHPSRYVKLTKDQDAPAEDIRPGELN) are disordered. The segment covering 16-29 (LTKDQDAPAEDIRP) has biased composition (basic and acidic residues). 2 consecutive transmembrane segments (helical) span residues 107 to 127 (CVCHAVFVEGGITLAILTAIF) and 136 to 156 (FLIGEGLVFSWWLCATYTGIF).

Belongs to the cornifelin family. As to expression, expressed in roots, leaves, stalks, apical meristems, immature ears, endosperm, pericarp and tassel spikelets.

The protein resides in the membrane. This chain is Cell number regulator 6 (CNR6), found in Zea mays (Maize).